Here is a 412-residue protein sequence, read N- to C-terminus: Thyroxine-binding globulin (412 aa).

The signal sequence occupies residues 1–16; that stretch reads MPLFFSLVLLILGLHC. N-linked (GlcNAc...) asparagine glycosylation is found at Asn-35, Asn-98, Asn-164, and Asn-252. Residues Asn-292 and Lys-395 each coordinate thyroxine.

This sequence belongs to the serpin family. Expressed by the liver and secreted in plasma.

Its subcellular location is the secreted. In terms of biological role, major thyroid hormone transport protein in serum. This Ovis aries (Sheep) protein is Thyroxine-binding globulin (SERPINA7).